Reading from the N-terminus, the 630-residue chain is uncharacterized protein (630 aa).

The next 4 helical transmembrane spans lie at 254-274 (MFYA…ELRV), 504-524 (IALL…LTSI), 564-584 (MIFA…SMVF), and 601-621 (IIVI…AVLF).

The protein resides in the cell membrane. This is an uncharacterized protein from Mycoplasma genitalium (strain ATCC 33530 / DSM 19775 / NCTC 10195 / G37) (Mycoplasmoides genitalium).